Here is a 467-residue protein sequence, read N- to C-terminus: Ribosomal RNA small subunit methyltransferase F (467 aa).

Residues 119-125, E143, D170, and D188 each bind S-adenosyl-L-methionine; that span reads ASAPGSK. C241 acts as the Nucleophile in catalysis.

The protein belongs to the class I-like SAM-binding methyltransferase superfamily. RsmB/NOP family.

The protein localises to the cytoplasm. It catalyses the reaction cytidine(1407) in 16S rRNA + S-adenosyl-L-methionine = 5-methylcytidine(1407) in 16S rRNA + S-adenosyl-L-homocysteine + H(+). Functionally, specifically methylates the cytosine at position 1407 (m5C1407) of 16S rRNA. This is Ribosomal RNA small subunit methyltransferase F from Shewanella amazonensis (strain ATCC BAA-1098 / SB2B).